Consider the following 563-residue polypeptide: Arginine--tRNA ligase (563 aa).

The 'HIGH' region signature appears at 121–131; the sequence is PNIAKPFSIGH.

It belongs to the class-I aminoacyl-tRNA synthetase family. Monomer.

Its subcellular location is the cytoplasm. The catalysed reaction is tRNA(Arg) + L-arginine + ATP = L-arginyl-tRNA(Arg) + AMP + diphosphate. This Streptococcus pyogenes serotype M3 (strain ATCC BAA-595 / MGAS315) protein is Arginine--tRNA ligase.